The primary structure comprises 97 residues: Putative defensin-like protein 227 (97 aa).

The first 26 residues, 1 to 26, serve as a signal peptide directing secretion; it reads MKWATLFMVSCVLMFFVMNNINEVES. 4 disulfide bridges follow: Cys35-Cys97, Cys45-Cys76, Cys53-Cys91, and Cys74-Cys93.

It belongs to the DEFL family.

Its subcellular location is the secreted. This chain is Putative defensin-like protein 227 (SCRL28), found in Arabidopsis thaliana (Mouse-ear cress).